A 388-amino-acid polypeptide reads, in one-letter code: Quinolone resistance protein NorA (388 aa).

12 consecutive transmembrane segments (helical) span residues 5 to 25 (IFVLYFNIFLIFLGIGLVIPV), 42 to 62 (LLVAAFALSQMIISPFGGTLA), 69 to 89 (LIICIGLILFSVSEFMFAVGH), 99 to 119 (VIGGMSAGMVMPGVTGLIADV), 129 to 149 (FGYMSAIINSGFILGPGIGGF), 157 to 177 (MPFYFAGALGILAFIMSVVLI), 201 to 221 (WKVFITPAILTLVLAFGLSAF), 239 to 259 (DISIAITGGGIFGALFQIYFF), 269 to 289 (LTFIAWSLIYSVIVLVLLVIA), 293 to 313 (WTIMVISFAVFIGFDMIRPAI), 331 to 351 (LNSTFTSMGNFIGPLIAGALF), and 355 to 375 (IEAPIYMAIGVSLAGVVIVLI).

Belongs to the major facilitator superfamily. TCR/Tet family.

The protein localises to the cell membrane. Involved in quinolone resistance. May constitute a membrane-associated active efflux pump of hydrophilic quinolones. This Staphylococcus aureus (strain MRSA252) protein is Quinolone resistance protein NorA (norA).